We begin with the raw amino-acid sequence, 476 residues long: Cytochrome c oxidase subunit 1 (476 aa).

Residues 19–39 (LYYLWFSFLFGSYGFLLSVIL) traverse the membrane as a helical segment. A Ca(2+)-binding site is contributed by Glu-42. 8 consecutive transmembrane segments (helical) span residues 61–81 (MIFTIHGIIMIFFNIMPGLFG), 105–125 (ISLLLQPIAFVLVILSTAAEF), 151–171 (VIIFGLLVSGVASIMSSLNFI), 194–214 (LIITSGMLLLTLPVLTGGVLM), 240–260 (LFWFFGHPEVYILILPAFGVI), 278–298 (MILAMGCIAVLGSLVWVHHMY), 310–330 (FTSTTILISIPTGTKVFNWIC), and 345–365 (LLSLLFICTFTFGGTTGVILG). Residue His-66 coordinates Fe(II)-heme a. His-246 is a binding site for Cu cation. The segment at residues 246 to 250 (HPEVY) is a cross-link (1'-histidyl-3'-tyrosine (His-Tyr)). Position 250 (Tyr-250) interacts with O2. Cu cation is bound by residues His-295 and His-296. Mg(2+) is bound by residues His-374 and Asp-375. A run of 2 helical transmembrane segments spans residues 379-399 (VIAHFHFVLSIGAIIGLFTTV) and 415-435 (SIVILWSMLFFVGVILTFLPM). His-382 provides a ligand contact to heme a3. His-384 serves as a coordination point for Fe(II)-heme a. Pro-448 contacts Ca(2+). Residues 455–475 (NGWNMICSIGSTMTLFGLLIF) traverse the membrane as a helical segment.

Belongs to the heme-copper respiratory oxidase family. In terms of assembly, component of the cytochrome c oxidase (complex IV, CIV), a multisubunit enzyme composed of a catalytic core of 3 subunits and several supernumerary subunits. The complex exists as a monomer or a dimer and forms supercomplexes (SCs) in the inner mitochondrial membrane with ubiquinol-cytochrome c oxidoreductase (cytochrome b-c1 complex, complex III, CIII). The cofactor is heme. It depends on Cu cation as a cofactor.

Its subcellular location is the mitochondrion inner membrane. The enzyme catalyses 4 Fe(II)-[cytochrome c] + O2 + 8 H(+)(in) = 4 Fe(III)-[cytochrome c] + 2 H2O + 4 H(+)(out). It participates in energy metabolism; oxidative phosphorylation. In terms of biological role, component of the cytochrome c oxidase, the last enzyme in the mitochondrial electron transport chain which drives oxidative phosphorylation. The respiratory chain contains 3 multisubunit complexes succinate dehydrogenase (complex II, CII), ubiquinol-cytochrome c oxidoreductase (cytochrome b-c1 complex, complex III, CIII) and cytochrome c oxidase (complex IV, CIV), that cooperate to transfer electrons derived from NADH and succinate to molecular oxygen, creating an electrochemical gradient over the inner membrane that drives transmembrane transport and the ATP synthase. Cytochrome c oxidase is the component of the respiratory chain that catalyzes the reduction of oxygen to water. Electrons originating from reduced cytochrome c in the intermembrane space (IMS) are transferred via the dinuclear copper A center (CU(A)) of subunit 2 and heme A of subunit 1 to the active site in subunit 1, a binuclear center (BNC) formed by heme A3 and copper B (CU(B)). The BNC reduces molecular oxygen to 2 water molecules using 4 electrons from cytochrome c in the IMS and 4 protons from the mitochondrial matrix. This chain is Cytochrome c oxidase subunit 1 (MT-CO1), found in Plasmodium falciparum.